The sequence spans 96 residues: Co-chaperonin GroES (96 aa).

The protein belongs to the GroES chaperonin family. As to quaternary structure, heptamer of 7 subunits arranged in a ring. Interacts with the chaperonin GroEL.

The protein localises to the cytoplasm. In terms of biological role, together with the chaperonin GroEL, plays an essential role in assisting protein folding. The GroEL-GroES system forms a nano-cage that allows encapsulation of the non-native substrate proteins and provides a physical environment optimized to promote and accelerate protein folding. GroES binds to the apical surface of the GroEL ring, thereby capping the opening of the GroEL channel. This Legionella micdadei (Tatlockia micdadei) protein is Co-chaperonin GroES.